The chain runs to 343 residues: Glyceraldehyde-3-phosphate dehydrogenase (343 aa).

NAD(+) contacts are provided by residues 13–14 and glycine 111; that span reads TI. 140–142 contributes to the D-glyceraldehyde 3-phosphate binding site; sequence SCN. The active-site Nucleophile is cysteine 141. NAD(+) is bound at residue arginine 169. 195-196 is a binding site for D-glyceraldehyde 3-phosphate; that stretch reads HA. Residue glutamine 303 coordinates NAD(+).

This sequence belongs to the glyceraldehyde-3-phosphate dehydrogenase family. As to quaternary structure, homotetramer.

The protein resides in the cytoplasm. It carries out the reaction D-glyceraldehyde 3-phosphate + phosphate + NADP(+) = (2R)-3-phospho-glyceroyl phosphate + NADPH + H(+). The enzyme catalyses D-glyceraldehyde 3-phosphate + phosphate + NAD(+) = (2R)-3-phospho-glyceroyl phosphate + NADH + H(+). The protein operates within carbohydrate degradation; glycolysis; pyruvate from D-glyceraldehyde 3-phosphate: step 1/5. In Sulfolobus acidocaldarius (strain ATCC 33909 / DSM 639 / JCM 8929 / NBRC 15157 / NCIMB 11770), this protein is Glyceraldehyde-3-phosphate dehydrogenase.